We begin with the raw amino-acid sequence, 81 residues long: Defensin-like protein 153 (81 aa).

An N-terminal signal peptide occupies residues 1–26 (MKNVSQVSVAVLLIFSILVLGIGVQG). Disulfide bonds link Cys-30–Cys-81, Cys-41–Cys-60, Cys-46–Cys-75, and Cys-50–Cys-77.

It belongs to the DEFL family.

It is found in the secreted. In Arabidopsis thaliana (Mouse-ear cress), this protein is Defensin-like protein 153 (LCR31).